Consider the following 154-residue polypeptide: Deoxyuridine 5'-triphosphate nucleotidohydrolase (154 aa).

Substrate contacts are provided by residues 72 to 74 (RSG), Asn-85, 89 to 91 (LID), and Met-99.

Belongs to the dUTPase family. The cofactor is Mg(2+).

It carries out the reaction dUTP + H2O = dUMP + diphosphate + H(+). Its pathway is pyrimidine metabolism; dUMP biosynthesis; dUMP from dCTP (dUTP route): step 2/2. Functionally, this enzyme is involved in nucleotide metabolism: it produces dUMP, the immediate precursor of thymidine nucleotides and it decreases the intracellular concentration of dUTP so that uracil cannot be incorporated into DNA. This is Deoxyuridine 5'-triphosphate nucleotidohydrolase from Psychrobacter sp. (strain PRwf-1).